A 481-amino-acid polypeptide reads, in one-letter code: Acyl-CoA ligase cnsG (481 aa).

The short motif at 3 to 11 is the PTS2-type peroxisomal targeting signal element; the sequence is SPQLPPSMK. Residues 124 to 132, 263 to 268, D353, and R368 each bind ATP; these read KSGTTGNPK and NGYGMT. T268 contributes to the substrate binding site. Residues 376 to 378 and 446 to 448 each bind CoA; these read GGL and AIF. K466 is an ATP binding site.

This sequence belongs to the ATP-dependent AMP-binding enzyme family.

The protein operates within alkaloid biosynthesis. Functionally, acyl-CoA ligase; part of the gene cluster that mediates the biosynthesis of communesins, a prominent class of indole alkaloids with great potential as pharmaceuticals. Communesins are biosynthesized by the coupling of tryptamine and aurantioclavine, two building blocks derived from L-tryptophan. The L-tryptophan decarboxylase cnsB converts L-tryptophan to tryptamine, whereas the tryptophan dimethylallyltransferase cnsF converts L-tryptophan to 4-dimethylallyl tryptophan which is further transformed to aurantioclavine by the aurantioclavine synthase cnsA, probably aided by the catalase cnsD. The cytochrome P450 monooxygenase cnsC catalyzes the heterodimeric coupling between the two different indole moieties, tryptamine and aurantioclavine, to construct vicinal quaternary stereocenters and yield the heptacyclic communesin scaffold. The O-methyltransferase cnsE then methylates the communesin scaffold to produce communesin K, the simplest characterized communesin that contains the heptacyclic core. The dioxygenase cnsJ converts communesin K into communesin I. Acylation to introduce the hexadienyl group at position N16 of communesin I by the acyltransferase cnsK leads to the production of communesin B. The hexadienyl group is produced by the highly reducing polyketide synthase cnsI, before being hydrolytically removed from cnsI by the serine hydrolase cnsH, converted into hexadienyl-CoA by the CoA ligase cnsG, and then transferred to communesin I by cnsK. Surprisingly, cnsK may also be a promiscuous acyltransferase that can tolerate a range of acyl groups, including acetyl-, propionyl-, and butyryl-CoA, which lead to communesins A, G and H respectively. The roles of the alpha-ketoglutarate-dependent dioxygenases cnsM and cnsP have still to be determined. The protein is Acyl-CoA ligase cnsG of Penicillium expansum (Blue mold rot fungus).